Reading from the N-terminus, the 340-residue chain is Serine/threonine-protein kinase PDIK1L (340 aa).

A Protein kinase domain is found at 8-333 (YDLIREVGRG…LELRLVQIAF (326 aa)). ATP contacts are provided by residues 14–22 (VGRGSYGVV) and K37. Residue D164 is the Proton acceptor of the active site.

This sequence belongs to the protein kinase superfamily. Ser/Thr protein kinase family.

Its subcellular location is the nucleus. The catalysed reaction is L-seryl-[protein] + ATP = O-phospho-L-seryl-[protein] + ADP + H(+). It carries out the reaction L-threonyl-[protein] + ATP = O-phospho-L-threonyl-[protein] + ADP + H(+). The polypeptide is Serine/threonine-protein kinase PDIK1L (PDIK1L) (Pongo abelii (Sumatran orangutan)).